The following is a 277-amino-acid chain: Phosphonates import ATP-binding protein PhnC 2 (277 aa).

The region spanning 3-251 is the ABC transporter domain; sequence ISLNGISVQH…LLQALYAQHL (249 aa). 40–47 is a binding site for ATP; it reads GPSGAGKT.

It belongs to the ABC transporter superfamily. Phosphonates importer (TC 3.A.1.9.1) family. As to quaternary structure, the complex is composed of two ATP-binding proteins (PhnC), two transmembrane proteins (PhnE) and a solute-binding protein (PhnD).

Its subcellular location is the cell inner membrane. It catalyses the reaction phosphonate(out) + ATP + H2O = phosphonate(in) + ADP + phosphate + H(+). Functionally, part of the ABC transporter complex PhnCDE involved in phosphonates import. Responsible for energy coupling to the transport system. The protein is Phosphonates import ATP-binding protein PhnC 2 of Albidiferax ferrireducens (strain ATCC BAA-621 / DSM 15236 / T118) (Rhodoferax ferrireducens).